A 172-amino-acid chain; its full sequence is ATP synthase subunit b (172 aa).

Residues 12-32 traverse the membrane as a helical segment; that stretch reads VGFNAGTMLFQLVAMLILLAL.

Belongs to the ATPase B chain family. As to quaternary structure, F-type ATPases have 2 components, F(1) - the catalytic core - and F(0) - the membrane proton channel. F(1) has five subunits: alpha(3), beta(3), gamma(1), delta(1), epsilon(1). F(0) has three main subunits: a(1), b(2) and c(10-14). The alpha and beta chains form an alternating ring which encloses part of the gamma chain. F(1) is attached to F(0) by a central stalk formed by the gamma and epsilon chains, while a peripheral stalk is formed by the delta and b chains.

It localises to the cell membrane. Its function is as follows. F(1)F(0) ATP synthase produces ATP from ADP in the presence of a proton or sodium gradient. F-type ATPases consist of two structural domains, F(1) containing the extramembraneous catalytic core and F(0) containing the membrane proton channel, linked together by a central stalk and a peripheral stalk. During catalysis, ATP synthesis in the catalytic domain of F(1) is coupled via a rotary mechanism of the central stalk subunits to proton translocation. In terms of biological role, component of the F(0) channel, it forms part of the peripheral stalk, linking F(1) to F(0). The polypeptide is ATP synthase subunit b (Bacillus licheniformis (strain ATCC 14580 / DSM 13 / JCM 2505 / CCUG 7422 / NBRC 12200 / NCIMB 9375 / NCTC 10341 / NRRL NRS-1264 / Gibson 46)).